We begin with the raw amino-acid sequence, 337 residues long: Holliday junction branch migration complex subunit RuvB (337 aa).

The segment at 4-184 (ADRLIQPQVL…FGIPLRLEFY (181 aa)) is large ATPase domain (RuvB-L). ATP is bound by residues arginine 24, glycine 65, lysine 68, threonine 69, threonine 70, 131–133 (EDY), arginine 174, tyrosine 184, and arginine 221. A Mg(2+)-binding site is contributed by threonine 69. Residues 185-255 (NVKDLCTIVT…VAQQALDMLD (71 aa)) are small ATPAse domain (RuvB-S). The head domain (RuvB-H) stretch occupies residues 258–337 (QEGFDYLDRK…FNIITPDVPK (80 aa)). Arginine 294, arginine 313, and arginine 318 together coordinate DNA.

Belongs to the RuvB family. In terms of assembly, homohexamer. Forms an RuvA(8)-RuvB(12)-Holliday junction (HJ) complex. HJ DNA is sandwiched between 2 RuvA tetramers; dsDNA enters through RuvA and exits via RuvB. An RuvB hexamer assembles on each DNA strand where it exits the tetramer. Each RuvB hexamer is contacted by two RuvA subunits (via domain III) on 2 adjacent RuvB subunits; this complex drives branch migration. In the full resolvosome a probable DNA-RuvA(4)-RuvB(12)-RuvC(2) complex forms which resolves the HJ.

The protein resides in the cytoplasm. The catalysed reaction is ATP + H2O = ADP + phosphate + H(+). The RuvA-RuvB-RuvC complex processes Holliday junction (HJ) DNA during genetic recombination and DNA repair, while the RuvA-RuvB complex plays an important role in the rescue of blocked DNA replication forks via replication fork reversal (RFR). RuvA specifically binds to HJ cruciform DNA, conferring on it an open structure. The RuvB hexamer acts as an ATP-dependent pump, pulling dsDNA into and through the RuvAB complex. RuvB forms 2 homohexamers on either side of HJ DNA bound by 1 or 2 RuvA tetramers; 4 subunits per hexamer contact DNA at a time. Coordinated motions by a converter formed by DNA-disengaged RuvB subunits stimulates ATP hydrolysis and nucleotide exchange. Immobilization of the converter enables RuvB to convert the ATP-contained energy into a lever motion, pulling 2 nucleotides of DNA out of the RuvA tetramer per ATP hydrolyzed, thus driving DNA branch migration. The RuvB motors rotate together with the DNA substrate, which together with the progressing nucleotide cycle form the mechanistic basis for DNA recombination by continuous HJ branch migration. Branch migration allows RuvC to scan DNA until it finds its consensus sequence, where it cleaves and resolves cruciform DNA. This is Holliday junction branch migration complex subunit RuvB from Shewanella denitrificans (strain OS217 / ATCC BAA-1090 / DSM 15013).